Consider the following 448-residue polypeptide: Exodeoxyribonuclease 7 large subunit (448 aa).

The protein belongs to the XseA family. Heterooligomer composed of large and small subunits.

The protein resides in the cytoplasm. It carries out the reaction Exonucleolytic cleavage in either 5'- to 3'- or 3'- to 5'-direction to yield nucleoside 5'-phosphates.. Functionally, bidirectionally degrades single-stranded DNA into large acid-insoluble oligonucleotides, which are then degraded further into small acid-soluble oligonucleotides. This chain is Exodeoxyribonuclease 7 large subunit, found in Enterococcus faecalis (strain ATCC 700802 / V583).